We begin with the raw amino-acid sequence, 278 residues long: Energy-coupling factor transporter ATP-binding protein EcfA (278 aa).

One can recognise an ABC transporter domain in the interval 5 to 240; sequence LETKNLVYNY…KEVIDEADLR (236 aa). 38-45 provides a ligand contact to ATP; the sequence is GHNGAGKS.

The protein belongs to the ABC transporter superfamily. Energy-coupling factor EcfA family. Forms a stable energy-coupling factor (ECF) transporter complex composed of 2 membrane-embedded substrate-binding proteins (S component), 2 ATP-binding proteins (A component) and 2 transmembrane proteins (T component).

The protein localises to the cell membrane. In terms of biological role, ATP-binding (A) component of a common energy-coupling factor (ECF) ABC-transporter complex. Unlike classic ABC transporters this ECF transporter provides the energy necessary to transport a number of different substrates. The sequence is that of Energy-coupling factor transporter ATP-binding protein EcfA from Methanosphaera stadtmanae (strain ATCC 43021 / DSM 3091 / JCM 11832 / MCB-3).